Consider the following 178-residue polypeptide: NAD(P)H-quinone oxidoreductase subunit 6, chloroplastic (178 aa).

The next 5 membrane-spanning stretches (helical) occupy residues 10-30, 32-52, 61-81, 94-114, and 154-174; these read FILV…VLFT, PIYS…FYIL, AQLL…VMFM, LWTI…FSLI, and FFLP…GAIA.

It belongs to the complex I subunit 6 family. As to quaternary structure, NDH is composed of at least 16 different subunits, 5 of which are encoded in the nucleus.

The protein resides in the plastid. It is found in the chloroplast thylakoid membrane. The catalysed reaction is a plastoquinone + NADH + (n+1) H(+)(in) = a plastoquinol + NAD(+) + n H(+)(out). It catalyses the reaction a plastoquinone + NADPH + (n+1) H(+)(in) = a plastoquinol + NADP(+) + n H(+)(out). In terms of biological role, NDH shuttles electrons from NAD(P)H:plastoquinone, via FMN and iron-sulfur (Fe-S) centers, to quinones in the photosynthetic chain and possibly in a chloroplast respiratory chain. The immediate electron acceptor for the enzyme in this species is believed to be plastoquinone. Couples the redox reaction to proton translocation, and thus conserves the redox energy in a proton gradient. The sequence is that of NAD(P)H-quinone oxidoreductase subunit 6, chloroplastic (ndhG) from Citrus sinensis (Sweet orange).